Reading from the N-terminus, the 355-residue chain is UDP-N-acetylglucosamine--N-acetylmuramyl-(pentapeptide) pyrophosphoryl-undecaprenol N-acetylglucosamine transferase (355 aa).

UDP-N-acetyl-alpha-D-glucosamine contacts are provided by residues 15 to 17, asparagine 127, arginine 163, serine 191, isoleucine 244, 263 to 268, and glutamine 288; these read TGG and ALTVSE.

The protein belongs to the glycosyltransferase 28 family. MurG subfamily.

Its subcellular location is the cell inner membrane. The enzyme catalyses di-trans,octa-cis-undecaprenyl diphospho-N-acetyl-alpha-D-muramoyl-L-alanyl-D-glutamyl-meso-2,6-diaminopimeloyl-D-alanyl-D-alanine + UDP-N-acetyl-alpha-D-glucosamine = di-trans,octa-cis-undecaprenyl diphospho-[N-acetyl-alpha-D-glucosaminyl-(1-&gt;4)]-N-acetyl-alpha-D-muramoyl-L-alanyl-D-glutamyl-meso-2,6-diaminopimeloyl-D-alanyl-D-alanine + UDP + H(+). It functions in the pathway cell wall biogenesis; peptidoglycan biosynthesis. Its function is as follows. Cell wall formation. Catalyzes the transfer of a GlcNAc subunit on undecaprenyl-pyrophosphoryl-MurNAc-pentapeptide (lipid intermediate I) to form undecaprenyl-pyrophosphoryl-MurNAc-(pentapeptide)GlcNAc (lipid intermediate II). The sequence is that of UDP-N-acetylglucosamine--N-acetylmuramyl-(pentapeptide) pyrophosphoryl-undecaprenol N-acetylglucosamine transferase from Salmonella paratyphi A (strain ATCC 9150 / SARB42).